Here is a 160-residue protein sequence, read N- to C-terminus: Lipoprotein signal peptidase (160 aa).

The next 3 helical transmembrane spans lie at 13-33 (IYIT…RLII), 72-92 (WFLS…ITKL), and 104-124 (SLII…GFVV). Catalysis depends on residues Asp125 and Asp143. The helical transmembrane segment at 134–154 (WHFATFNIADCSIFIGIIILM) threads the bilayer.

This sequence belongs to the peptidase A8 family.

The protein localises to the cell inner membrane. The catalysed reaction is Release of signal peptides from bacterial membrane prolipoproteins. Hydrolyzes -Xaa-Yaa-Zaa-|-(S,diacylglyceryl)Cys-, in which Xaa is hydrophobic (preferably Leu), and Yaa (Ala or Ser) and Zaa (Gly or Ala) have small, neutral side chains.. Its pathway is protein modification; lipoprotein biosynthesis (signal peptide cleavage). Functionally, this protein specifically catalyzes the removal of signal peptides from prolipoproteins. The polypeptide is Lipoprotein signal peptidase (Buchnera aphidicola subsp. Acyrthosiphon pisum (strain 5A)).